The sequence spans 44 residues: Thymosin beta-4 (44 aa).

Basic and acidic residues-rich tracts occupy residues 1-25 and 33-44; these read MSDKPDMAEIEKFDKAKLKKTETQE and ETIEQEKQTSES. Residues 1–44 are disordered; it reads MSDKPDMAEIEKFDKAKLKKTETQEKNPLPSKETIEQEKQTSES. Ser-2 is modified (N-acetylserine).

The protein belongs to the thymosin beta family. Spleen, kidney, heart, and oocytes.

The protein localises to the cytoplasm. Its subcellular location is the cytoskeleton. Plays an important role in the organization of the cytoskeleton. Binds to and sequesters actin monomers (G actin) and therefore inhibits actin polymerization. This chain is Thymosin beta-4 (tmsb4), found in Xenopus laevis (African clawed frog).